Reading from the N-terminus, the 156-residue chain is MPRRRSVEARKILPDPKFGSELLAKFINVIMVDGKKSVAESIVYGALETLAQRTGKEPLEAFEVALENVRPTVEVKSRRVGGSTYQVPVEVRPVRRNALGMRWIVEAARKRGDKSMALRLANELSDASDNKGAAVKKREDVHRMAEANKAFAHYRW.

Belongs to the universal ribosomal protein uS7 family. As to quaternary structure, part of the 30S ribosomal subunit. Contacts proteins S9 and S11.

Functionally, one of the primary rRNA binding proteins, it binds directly to 16S rRNA where it nucleates assembly of the head domain of the 30S subunit. Is located at the subunit interface close to the decoding center, probably blocks exit of the E-site tRNA. This is Small ribosomal subunit protein uS7 from Haemophilus influenzae (strain 86-028NP).